A 535-amino-acid chain; its full sequence is Transmembrane protein 151 homolog (535 aa).

3 helical membrane-spanning segments follow: residues 27 to 47 (GYGK…YATY), 73 to 93 (YNFV…MECW), and 254 to 274 (PWFL…SWPL). Residues 498–535 (ASISHSSSKDLKSLTLKNNNGAANNNNNNNNENPEEQP) are disordered. Residues 510 to 529 (SLTLKNNNGAANNNNNNNNE) are compositionally biased toward low complexity.

It belongs to the TMEM151 family.

It is found in the membrane. In Caenorhabditis briggsae, this protein is Transmembrane protein 151 homolog.